A 62-amino-acid polypeptide reads, in one-letter code: Large ribosomal subunit protein bL28 (62 aa).

This sequence belongs to the bacterial ribosomal protein bL28 family.

This chain is Large ribosomal subunit protein bL28, found in Thermoanaerobacter sp. (strain X514).